A 213-amino-acid polypeptide reads, in one-letter code: Uridine kinase (213 aa).

15–22 (GASASGKS) serves as a coordination point for ATP.

It belongs to the uridine kinase family.

Its subcellular location is the cytoplasm. The catalysed reaction is uridine + ATP = UMP + ADP + H(+). The enzyme catalyses cytidine + ATP = CMP + ADP + H(+). Its pathway is pyrimidine metabolism; CTP biosynthesis via salvage pathway; CTP from cytidine: step 1/3. It functions in the pathway pyrimidine metabolism; UMP biosynthesis via salvage pathway; UMP from uridine: step 1/1. The chain is Uridine kinase from Enterobacter sp. (strain 638).